Reading from the N-terminus, the 311-residue chain is Malate dehydrogenase (311 aa).

Residues 7 to 13 and Asp-34 each bind NAD(+); that span reads GAAGGIG. The substrate site is built by Arg-81 and Arg-87. NAD(+)-binding positions include Asn-94 and 117–119; that span reads ITN. Substrate-binding residues include Asn-119 and Arg-153. Catalysis depends on His-177, which acts as the Proton acceptor. Met-227 contacts NAD(+).

This sequence belongs to the LDH/MDH superfamily. MDH type 1 family. In terms of assembly, homodimer.

The enzyme catalyses (S)-malate + NAD(+) = oxaloacetate + NADH + H(+). In terms of biological role, catalyzes the reversible oxidation of malate to oxaloacetate. In Haemophilus influenzae (strain 86-028NP), this protein is Malate dehydrogenase.